A 490-amino-acid chain; its full sequence is Aspartyl/glutamyl-tRNA(Asn/Gln) amidotransferase subunit B (490 aa).

Belongs to the GatB/GatE family. GatB subfamily. In terms of assembly, heterotrimer of A, B and C subunits.

The catalysed reaction is L-glutamyl-tRNA(Gln) + L-glutamine + ATP + H2O = L-glutaminyl-tRNA(Gln) + L-glutamate + ADP + phosphate + H(+). It catalyses the reaction L-aspartyl-tRNA(Asn) + L-glutamine + ATP + H2O = L-asparaginyl-tRNA(Asn) + L-glutamate + ADP + phosphate + 2 H(+). In terms of biological role, allows the formation of correctly charged Asn-tRNA(Asn) or Gln-tRNA(Gln) through the transamidation of misacylated Asp-tRNA(Asn) or Glu-tRNA(Gln) in organisms which lack either or both of asparaginyl-tRNA or glutaminyl-tRNA synthetases. The reaction takes place in the presence of glutamine and ATP through an activated phospho-Asp-tRNA(Asn) or phospho-Glu-tRNA(Gln). This Burkholderia vietnamiensis (strain G4 / LMG 22486) (Burkholderia cepacia (strain R1808)) protein is Aspartyl/glutamyl-tRNA(Asn/Gln) amidotransferase subunit B.